The primary structure comprises 236 residues: Protein INCA1 (236 aa).

Position 23 is a phosphoserine (Ser-23). The segment at Gly-75–Glu-99 is interaction with CCNA1 and CCNA1/CDK2 complex; essential for CDK2 inhibitory activity. The short motif at Arg-90 to Arg-95 is the Nuclear localization signal element. A Phosphothreonine modification is found at Thr-182. Phosphoserine occurs at positions 191 and 194.

The protein belongs to the INCA family. In terms of assembly, interacts with CCNA1. Interacts with CCNA2, CCNB1 and CCNE1. Found in a complex with CCNA1 and CDK2. Interacts with ZNF16; the interaction inhibits INCA1 activity and induces the cell cycle process. Interacts with SPACA9. Interacts with the CCNA1/CDK2 complex. Interacts with ING5, DAZAP2, RNF26, USP15, SPOUT1, DPH7, TRIM26 and RAB5C. In terms of processing, phosphorylated when part of a complex with CCNA1 and CDK2. Strongly phosphorylated by CDK2 on its C-terminal region spanning amino acid 149-221. Less intensively phosphorylated by CDK2 on its first 75 amino acid residues. As to expression, detected in testis, and at lower levels in ovary. Detected at very low levels in testis tumors. Down-regulated in bone marrow cells in acute myeloid and lymphoid leukemia patients as compared with normal bone marrow cells.

The protein localises to the nucleus. It localises to the cytoplasm. Binds to CDK2-bound cyclins and inhibits the kinase activity of CDK2; binding to cyclins is critical for its function as CDK inhibitor. Inhibits cell growth and cell proliferation and may play a role in cell cycle control. Required for ING5-mediated regulation of S-phase progression, enhancement of Fas-induced apoptosis and inhibition of cell growth. This Homo sapiens (Human) protein is Protein INCA1 (INCA1).